Consider the following 298-residue polypeptide: Acetylglutamate kinase (298 aa).

Substrate contacts are provided by residues 66–67 (GG), Arg-88, and Asn-193.

The protein belongs to the acetylglutamate kinase family. ArgB subfamily.

It localises to the cytoplasm. The catalysed reaction is N-acetyl-L-glutamate + ATP = N-acetyl-L-glutamyl 5-phosphate + ADP. Its pathway is amino-acid biosynthesis; L-arginine biosynthesis; N(2)-acetyl-L-ornithine from L-glutamate: step 2/4. Catalyzes the ATP-dependent phosphorylation of N-acetyl-L-glutamate. This is Acetylglutamate kinase from Methanosphaera stadtmanae (strain ATCC 43021 / DSM 3091 / JCM 11832 / MCB-3).